The primary structure comprises 935 residues: Mannosyltransferase regulator 14 (935 aa).

The Cytoplasmic segment spans residues 1-21 (MMLSLRRFSMYVLRSLRLHFK). The helical; Signal-anchor for type II membrane protein transmembrane segment at 22–42 (KIIITLLTIQLLFITIFVLGG) threads the bilayer. At 43–935 (RSSIIDGNWK…NNIFGSDQKY (893 aa)) the chain is on the lumenal side. The DXD motif lies at 498–500 (DHD).

This sequence belongs to the MNN4 family.

It is found in the golgi apparatus membrane. Its function is as follows. Plays a role in N-glycan mannosylphosphorylation and has partially redundant function with MNN4. The protein is Mannosyltransferase regulator 14 of Saccharomyces cerevisiae (strain ATCC 204508 / S288c) (Baker's yeast).